The sequence spans 334 residues: MTENSDKVPITMVGPEDVEFCSPPAYTTVTVKPSGSPTRLLKVGAVVLISGAVLLLFGAIGAFYFWKGNDNHIYNVHYSMSINGKLQDGSMEIDAVNNLETFKMGSGAEEAIEVNDFKNGITGIRFAGGEKCYIKAQVKARIPEVGTVTKQSISELEGKIMPANYEENSLIWVAVDQPVKDSSFLSSKILELCGDLPIFWLKPMYPKEIQRERREVVRNSAPSTTRRPHSEPRGNAGPGRLSNGTRPNVQDDAEPFNPDNPYHQQEGESMTFDPRLDHEGICCIECRRSYTHCQKICEPLGGYYPWPYNYQGCRSACRVVMPCSWWVARILGMV.

The helical transmembrane segment at 46–66 threads the bilayer; it reads VVLISGAVLLLFGAIGAFYFW. A BRICHOS domain is found at 105 to 201; that stretch reads GSGAEEAIEV…LCGDLPIFWL (97 aa). An intrachain disulfide couples C132 to C193. The propeptide occupies 211–214; sequence RERR. The disordered stretch occupies residues 212–270; the sequence is ERREVVRNSAPSTTRRPHSEPRGNAGPGRLSNGTRPNVQDDAEPFNPDNPYHQQEGESM. N243 is a glycosylation site (N-linked (GlcNAc...) asparagine). 4 disulfides stabilise this stretch: C282/C286, C283/C323, C293/C317, and C297/C313.

Belongs to the chondromodulin-1 family. Post-translationally, after cleavage, the post-translationally modified ChM-I is secreted as a glycoprotein. As to expression, detected in the four cardiac valves, valvular interstitial cells and extracellular matrix (at protein level).

It localises to the secreted. It is found in the extracellular space. Its subcellular location is the extracellular matrix. The protein resides in the endomembrane system. In terms of biological role, bifunctional growth regulator that stimulates the growth of cultured chondrocytes in the presence of basic fibroblast growth factor (FGF) but inhibits the growth of cultured vascular endothelial cells. May contribute to the rapid growth of cartilage and vascular invasion prior to the replacement of cartilage by bone during endochondral bone development. Inhibits in vitro tube formation and mobilization of endothelial cells. Plays a role as antiangiogenic factor in cardiac valves to suppress neovascularization. The protein is Leukocyte cell-derived chemotaxin 1 of Mus musculus (Mouse).